We begin with the raw amino-acid sequence, 578 residues long: Probable arginine--tRNA ligase, mitochondrial (578 aa).

A mitochondrion-targeting transit peptide spans 1–16; sequence MACGFRRSIACQLSRV. L-arginine-binding positions include 133 to 135, His144, Tyr322, Asp326, and Gln350; that span reads SPN. Residues 133-144 carry the 'HIGH' region motif; the sequence is SPNIAKKFHVGH. Lys568 is modified (N6-acetyllysine).

The protein belongs to the class-I aminoacyl-tRNA synthetase family.

The protein resides in the mitochondrion membrane. It carries out the reaction tRNA(Arg) + L-arginine + ATP = L-arginyl-tRNA(Arg) + AMP + diphosphate. Its function is as follows. Catalyzes the attachment of arginine to tRNA(Arg) in a two-step reaction: arginine is first activated by ATP to form Arg-AMP and then transferred to the acceptor end of tRNA(Arg). This is Probable arginine--tRNA ligase, mitochondrial (Rars2) from Mus musculus (Mouse).